We begin with the raw amino-acid sequence, 276 residues long: Energy-coupling factor transporter ATP-binding protein EcfA1 (276 aa).

The ABC transporter domain occupies 2–237 (IEIKNLKFKY…GSELVDLGLD (236 aa)). 37–44 (GHNGSGKS) serves as a coordination point for ATP.

Belongs to the ABC transporter superfamily. Energy-coupling factor EcfA family. Forms a stable energy-coupling factor (ECF) transporter complex composed of 2 membrane-embedded substrate-binding proteins (S component), 2 ATP-binding proteins (A component) and 2 transmembrane proteins (T component).

It localises to the cell membrane. ATP-binding (A) component of a common energy-coupling factor (ECF) ABC-transporter complex. Unlike classic ABC transporters this ECF transporter provides the energy necessary to transport a number of different substrates. The chain is Energy-coupling factor transporter ATP-binding protein EcfA1 from Streptococcus thermophilus (strain ATCC BAA-491 / LMD-9).